The primary structure comprises 258 residues: Imidazole glycerol phosphate synthase subunit HisF (258 aa).

Active-site residues include Asp-11 and Asp-130.

It belongs to the HisA/HisF family. Heterodimer of HisH and HisF.

The protein localises to the cytoplasm. The enzyme catalyses 5-[(5-phospho-1-deoxy-D-ribulos-1-ylimino)methylamino]-1-(5-phospho-beta-D-ribosyl)imidazole-4-carboxamide + L-glutamine = D-erythro-1-(imidazol-4-yl)glycerol 3-phosphate + 5-amino-1-(5-phospho-beta-D-ribosyl)imidazole-4-carboxamide + L-glutamate + H(+). It functions in the pathway amino-acid biosynthesis; L-histidine biosynthesis; L-histidine from 5-phospho-alpha-D-ribose 1-diphosphate: step 5/9. Its function is as follows. IGPS catalyzes the conversion of PRFAR and glutamine to IGP, AICAR and glutamate. The HisF subunit catalyzes the cyclization activity that produces IGP and AICAR from PRFAR using the ammonia provided by the HisH subunit. The polypeptide is Imidazole glycerol phosphate synthase subunit HisF (Shigella boydii serotype 4 (strain Sb227)).